We begin with the raw amino-acid sequence, 250 residues long: 5'-nucleotidase SurE (250 aa).

4 residues coordinate a divalent metal cation: Asp8, Asp9, Ser40, and Asn94.

Belongs to the SurE nucleotidase family. Requires a divalent metal cation as cofactor.

Its subcellular location is the cytoplasm. The catalysed reaction is a ribonucleoside 5'-phosphate + H2O = a ribonucleoside + phosphate. Nucleotidase that shows phosphatase activity on nucleoside 5'-monophosphates. This is 5'-nucleotidase SurE from Wolbachia sp. subsp. Drosophila simulans (strain wRi).